Here is a 207-residue protein sequence, read N- to C-terminus: Zinc finger protein 487 (207 aa).

The region spanning 1-43 (MLENYSLLLSVGYCITKPEVVCKLEHGQVLWILEEESPSQSHL) is the KRAB domain. The C2H2-type; atypical zinc-finger motif lies at 177–202 (KQCFEYNQCGKAFHEEAACSTHKRVC).

This sequence belongs to the krueppel C2H2-type zinc-finger protein family.

It is found in the nucleus. May be involved in transcriptional regulation. The sequence is that of Zinc finger protein 487 (ZNF487) from Homo sapiens (Human).